Consider the following 391-residue polypeptide: Small ribosomal subunit protein bS1 (391 aa).

S1 motif domains are found at residues 16–90 (GDKV…LSRR), 108–173 (NEII…LSRK), 194–262 (GDVI…LSIK), and 279–348 (NDDI…LSIK). Positions 356-381 (VVESDPSTTKAYLESEEEDNPTIGDM) are disordered.

Belongs to the bacterial ribosomal protein bS1 family.

Its function is as follows. Binds mRNA; thus facilitating recognition of the initiation point. It is needed to translate mRNA with a short Shine-Dalgarno (SD) purine-rich sequence. This chain is Small ribosomal subunit protein bS1 (rpsA), found in Staphylococcus aureus (strain MRSA252).